Here is a 120-residue protein sequence, read N- to C-terminus: Large ribosomal subunit protein bL19c (120 aa).

Belongs to the bacterial ribosomal protein bL19 family.

Its subcellular location is the plastid. It localises to the chloroplast. The protein is Large ribosomal subunit protein bL19c of Thalassiosira pseudonana (Marine diatom).